The primary structure comprises 556 residues: Putative D-arabinono-1,4-lactone oxidase (556 aa).

One can recognise an FAD-binding PCMH-type domain in the interval 47–217 (FTSLPELYIQ…TEVTFKAVPA (171 aa)). Residue His84 is modified to Pros-8alpha-FAD histidine.

This sequence belongs to the oxygen-dependent FAD-linked oxidoreductase family. It depends on FAD as a cofactor.

The protein localises to the mitochondrion membrane. The catalysed reaction is D-arabinono-1,4-lactone + O2 = dehydro-D-arabinono-1,4-lactone + H2O2 + H(+). It functions in the pathway cofactor biosynthesis; D-erythroascorbate biosynthesis; dehydro-D-arabinono-1,4-lactone from D-arabinose: step 2/2. The chain is Putative D-arabinono-1,4-lactone oxidase (alo-1) from Neurospora crassa (strain ATCC 24698 / 74-OR23-1A / CBS 708.71 / DSM 1257 / FGSC 987).